The following is a 495-amino-acid chain: MSNSPTVATLSQEYFDPNIPQILPHEKMYKIQVGKSLFKISGASLSSDGPSFFTEYFSKKRSPSNNDDSNNDTMESNKNEVLFIDRSAEVFEWIYQHLQGYIIEIKDEVQYTMLFADAMYYNLPRLRSLLKETDYYFTNIGGQSFKIAKNLFRREGDSPNYFEIYAATVYIDVEELIISKKLLRPPSHSAPYIPRSSEYFKDLLTLLGGASIDLDDNKRNALIKECRYYRLLNLEQRLIKSHISYNPITRKEEICLLLKDLSKKGITFPASSAFSTSPYFEDDFCSINECDSLSKTREQPANKKIKLDMTEKYNDSWNMLCYKRPFLDKHPRELIFQINSTDCTIILNKESQSIHVDITGESAYKFEALFGSHLPNTPSGAPKLKNYQYRFPSDSTQTKIETHYLLPACIYLCDLDINGIKISQVQTLLTDKNKFNDRVIDVSDPLDLRFCSGLKLYLRKSLWKLAVKDGNIMLIAIKAIAFNGTKEYYKGYEYL.

It is found in the cytoplasm. The protein resides in the nucleus. This is an uncharacterized protein from Saccharomyces cerevisiae (strain ATCC 204508 / S288c) (Baker's yeast).